A 570-amino-acid polypeptide reads, in one-letter code: Glycine--tRNA ligase (570 aa).

Residues Arg99 and Glu165 each contribute to the substrate site. Residues 197 to 199, 207 to 212, 324 to 325, and 443 to 446 contribute to the ATP site; these read RNE, LRLREF, EC, and GIDR. Residue 212–216 coordinates substrate; sequence FTQAE. 439–443 is a substrate binding site; that stretch reads EPSFG.

The protein belongs to the class-II aminoacyl-tRNA synthetase family.

The protein resides in the cytoplasm. It carries out the reaction tRNA(Gly) + glycine + ATP = glycyl-tRNA(Gly) + AMP + diphosphate. Functionally, catalyzes the attachment of glycine to tRNA(Gly). This Thermococcus kodakarensis (strain ATCC BAA-918 / JCM 12380 / KOD1) (Pyrococcus kodakaraensis (strain KOD1)) protein is Glycine--tRNA ligase.